Consider the following 429-residue polypeptide: Serine hydroxymethyltransferase (429 aa).

Residues Leu-126 and 130–132 contribute to the (6S)-5,6,7,8-tetrahydrofolate site; that span reads GHL. Lys-235 carries the post-translational modification N6-(pyridoxal phosphate)lysine. (6S)-5,6,7,8-tetrahydrofolate is bound at residue 359–361; that stretch reads SPF.

This sequence belongs to the SHMT family. As to quaternary structure, homodimer. Pyridoxal 5'-phosphate serves as cofactor.

The protein resides in the cytoplasm. The catalysed reaction is (6R)-5,10-methylene-5,6,7,8-tetrahydrofolate + glycine + H2O = (6S)-5,6,7,8-tetrahydrofolate + L-serine. Its pathway is one-carbon metabolism; tetrahydrofolate interconversion. It participates in amino-acid biosynthesis; glycine biosynthesis; glycine from L-serine: step 1/1. Catalyzes the reversible interconversion of serine and glycine with tetrahydrofolate (THF) serving as the one-carbon carrier. This reaction serves as the major source of one-carbon groups required for the biosynthesis of purines, thymidylate, methionine, and other important biomolecules. Also exhibits THF-independent aldolase activity toward beta-hydroxyamino acids, producing glycine and aldehydes, via a retro-aldol mechanism. The polypeptide is Serine hydroxymethyltransferase (Parasynechococcus marenigrum (strain WH8102)).